Reading from the N-terminus, the 684-residue chain is 77 kDa membrane protein (684 aa).

An N-terminal signal peptide occupies residues 1 to 30 (MKFKSLITTTLALGVLASTGANFNNNEASA). MAP repeat units lie at residues 45–154 (GYSK…EDKK), 156–265 (DKAN…ENKA), 266–374 (KRNY…KADR), 375–474 (YVPY…TGTK), 475–584 (AKAD…KKNN), and 586–684 (SNNV…ELKF).

The protein resides in the cell membrane. Its function is as follows. Binds various plasma and ECM-proteins. The sequence is that of 77 kDa membrane protein from Staphylococcus aureus (strain COL).